The chain runs to 193 residues: Acyl carrier protein phosphodiesterase (193 aa).

This sequence belongs to the AcpH family.

The catalysed reaction is holo-[ACP] + H2O = apo-[ACP] + (R)-4'-phosphopantetheine + H(+). In terms of biological role, converts holo-ACP to apo-ACP by hydrolytic cleavage of the phosphopantetheine prosthetic group from ACP. The polypeptide is Acyl carrier protein phosphodiesterase (Serratia proteamaculans (strain 568)).